A 503-amino-acid polypeptide reads, in one-letter code: Aspartyl/glutamyl-tRNA(Asn/Gln) amidotransferase subunit B (503 aa).

This sequence belongs to the GatB/GatE family. GatB subfamily. In terms of assembly, heterotrimer of A, B and C subunits.

It catalyses the reaction L-glutamyl-tRNA(Gln) + L-glutamine + ATP + H2O = L-glutaminyl-tRNA(Gln) + L-glutamate + ADP + phosphate + H(+). The catalysed reaction is L-aspartyl-tRNA(Asn) + L-glutamine + ATP + H2O = L-asparaginyl-tRNA(Asn) + L-glutamate + ADP + phosphate + 2 H(+). Functionally, allows the formation of correctly charged Asn-tRNA(Asn) or Gln-tRNA(Gln) through the transamidation of misacylated Asp-tRNA(Asn) or Glu-tRNA(Gln) in organisms which lack either or both of asparaginyl-tRNA or glutaminyl-tRNA synthetases. The reaction takes place in the presence of glutamine and ATP through an activated phospho-Asp-tRNA(Asn) or phospho-Glu-tRNA(Gln). The chain is Aspartyl/glutamyl-tRNA(Asn/Gln) amidotransferase subunit B from Cereibacter sphaeroides (strain ATCC 17023 / DSM 158 / JCM 6121 / CCUG 31486 / LMG 2827 / NBRC 12203 / NCIMB 8253 / ATH 2.4.1.) (Rhodobacter sphaeroides).